Here is a 182-residue protein sequence, read N- to C-terminus: UPF0397 protein SPH_0594 (182 aa).

5 helical membrane passes run 10–30 (VVAVGIGAALFVVIGMINIPT), 46–66 (LLSIIFGPIIGLLVGVIGHAI), 73–93 (YGLWWTWIIASGLFGLVVGLF), 109–129 (ILIFNLIQLLANALVWGVLAP), and 148–168 (IVAGIANGVSVAIAGTLLLLA).

The protein belongs to the UPF0397 family.

The protein resides in the cell membrane. This chain is UPF0397 protein SPH_0594, found in Streptococcus pneumoniae (strain Hungary19A-6).